A 337-amino-acid polypeptide reads, in one-letter code: Arylacetonitrilase (337 aa).

Residues 7 to 278 (VRVAVTQHEP…EGFVYADLDL (272 aa)) form the CN hydrolase domain. E47 (proton acceptor) is an active-site residue. The active site involves K127. C162 (nucleophile) is an active-site residue. A disordered region spans residues 311-337 (QHRPEGQADNAAYGLDVPSGLVEEEGA).

The protein belongs to the carbon-nitrogen hydrolase superfamily. Nitrilase family.

It catalyses the reaction a nitrile + 2 H2O = a carboxylate + NH4(+). The enzyme catalyses 4-chlorophenylacetonitrile + 2 H2O = 4-chlorophenylacetate + NH4(+). Nitrilase that hydrolyzes preferentially phenylacetonitrile, but also (R,S)-mandelonitrile, and 2-phenylpropionitrile. This chain is Arylacetonitrilase, found in Aspergillus niger (strain ATCC MYA-4892 / CBS 513.88 / FGSC A1513).